Here is a 557-residue protein sequence, read N- to C-terminus: Glutathione hydrolase proenzyme (557 aa).

The first 24 residues, 1-24 (MQPVLFRTLSLGVAIAAASSSAFA), serve as a signal peptide directing secretion. Residue arginine 94 participates in L-glutamate binding. Threonine 364 acts as the Nucleophile in catalysis. L-glutamate contacts are provided by residues threonine 382, asparagine 384, glutamate 403, aspartate 406, 435 to 436 (SS), and 456 to 457 (GG).

This sequence belongs to the gamma-glutamyltransferase family. As to quaternary structure, this enzyme consists of two polypeptide chains, which are synthesized in precursor form from a single polypeptide. In terms of processing, cleaved by autocatalysis into a large and a small subunit.

It localises to the periplasm. The enzyme catalyses an N-terminal (5-L-glutamyl)-[peptide] + an alpha-amino acid = 5-L-glutamyl amino acid + an N-terminal L-alpha-aminoacyl-[peptide]. It carries out the reaction glutathione + H2O = L-cysteinylglycine + L-glutamate. It catalyses the reaction an S-substituted glutathione + H2O = an S-substituted L-cysteinylglycine + L-glutamate. It functions in the pathway sulfur metabolism; glutathione metabolism. This chain is Glutathione hydrolase proenzyme (ggt), found in Pseudomonas aeruginosa (strain ATCC 15692 / DSM 22644 / CIP 104116 / JCM 14847 / LMG 12228 / 1C / PRS 101 / PAO1).